The following is a 77-amino-acid chain: Acyl carrier protein (77 aa).

The Carrier domain maps to 2–77; that stretch reads ADVLERVTKI…DAVTYIESHL (76 aa). An O-(pantetheine 4'-phosphoryl)serine modification is found at Ser37.

Belongs to the acyl carrier protein (ACP) family. Post-translationally, 4'-phosphopantetheine is transferred from CoA to a specific serine of apo-ACP by AcpS. This modification is essential for activity because fatty acids are bound in thioester linkage to the sulfhydryl of the prosthetic group.

It is found in the cytoplasm. It participates in lipid metabolism; fatty acid biosynthesis. Functionally, carrier of the growing fatty acid chain in fatty acid biosynthesis. The sequence is that of Acyl carrier protein from Bacillus anthracis (strain A0248).